A 283-amino-acid chain; its full sequence is 4-diphosphocytidyl-2-C-methyl-D-erythritol kinase (283 aa).

The active site involves lysine 10. 99–109 (PMGGGLGGGSS) provides a ligand contact to ATP. Aspartate 141 is an active-site residue.

This sequence belongs to the GHMP kinase family. IspE subfamily. As to quaternary structure, homodimer.

The enzyme catalyses 4-CDP-2-C-methyl-D-erythritol + ATP = 4-CDP-2-C-methyl-D-erythritol 2-phosphate + ADP + H(+). It participates in isoprenoid biosynthesis; isopentenyl diphosphate biosynthesis via DXP pathway; isopentenyl diphosphate from 1-deoxy-D-xylulose 5-phosphate: step 3/6. In terms of biological role, catalyzes the phosphorylation of the position 2 hydroxy group of 4-diphosphocytidyl-2C-methyl-D-erythritol. The sequence is that of 4-diphosphocytidyl-2-C-methyl-D-erythritol kinase from Escherichia coli O9:H4 (strain HS).